The primary structure comprises 215 residues: Deoxyadenosine kinase (215 aa).

Gly-9 to Ser-17 is a binding site for ATP. The substrate site is built by Glu-33, Tyr-45, and Asn-56. Asp-79 acts as the Proton acceptor in catalysis. Arg-80, Asp-85, and Glu-150 together coordinate substrate.

It belongs to the DCK/DGK family. As to quaternary structure, heterodimer of a deoxyadenosine (DAK) and a deoxyguanosine kinase (DGK).

It carries out the reaction 2'-deoxyadenosine + ATP = dAMP + ADP + H(+). DGK/DAK plays an essential role in generating the deoxyribonucleotide precursors, dGTP and dATP, for DNA metabolism. This is Deoxyadenosine kinase from Lactobacillus acidophilus (strain ATCC 700396 / NCK56 / N2 / NCFM).